We begin with the raw amino-acid sequence, 969 residues long: Probable Rho-type GTPase-activating protein 3 (969 aa).

LIM zinc-binding domains are found at residues 17–81 (TVCF…CTAC) and 76–135 (HTCT…RHPS). Disordered regions lie at residues 170-223 (IEIM…ADSL), 348-459 (ATSP…VEEL), and 613-646 (TSSK…SPNL). Polar residues predominate over residues 193-202 (ETPTNMSQAE). 2 stretches are compositionally biased toward low complexity: residues 212–223 (DSNLASNSADSL) and 350–361 (SPFRPFSPSYRS). Polar residues-rich tracts occupy residues 369–392 (TRSP…SFAQ) and 418–432 (LSET…SLGS). Positions 450–459 (SERDSDVEEL) are enriched in basic and acidic residues. Low complexity predominate over residues 613-623 (TSSKNTTSSIN). Positions 624–637 (PLTAVSSNSGQSSG) are enriched in polar residues. The Phorbol-ester/DAG-type zinc finger occupies 697–744 (DHVFHVNAIFKPSRCYICSESVWGSELRCFHCSISCHSRCLKRLFAES). The Rho-GAP domain maps to 780-966 (RSLENQLKIE…FMLDNVDKIL (187 aa)).

Interacts with dil1.

It is found in the cell tip. GTPase-activating protein for Rho-type proteins. The sequence is that of Probable Rho-type GTPase-activating protein 3 (rga3) from Schizosaccharomyces pombe (strain 972 / ATCC 24843) (Fission yeast).